Reading from the N-terminus, the 247-residue chain is Protein McbF (247 aa).

One can recognise an ABC transporter domain in the interval 6-234; it reads LEINSLSFSY…NNETTQKRHL (229 aa). ATP is bound at residue 40–47; it reads GENPAGKT.

The protein belongs to the ABC transporter superfamily.

Its function is as follows. Together with two further proteins McbE and McbG this protein causes immunity to the peptide antibiotic microcin B17, which inhibits DNA replication in enterobacteriaceae. Immunity is determined by two different mechanisms. McbE is involved in the production of extracellular MccB17 and, in a complex with mcbf it also serves as 'pump' for the export of active MccB17 from the cytoplasm to the periplasmic space. The sequence is that of Protein McbF (mcbF) from Escherichia coli.